A 2208-amino-acid polypeptide reads, in one-letter code: RNA-directed RNA polymerase L (2208 aa).

Residues Lys26–Cys284 are endonuclease. Mn(2+) contacts are provided by Glu51, Asp89, and Glu102. The active site involves Lys115. The region spanning Cys1171–Val1367 is the RdRp catalytic domain. Asp1329 contacts Mg(2+).

The protein belongs to the Bunyavirales RNA polymerase family. In terms of assembly, homomultimer; the oligomeric structure is essential for the polymerase activity. Interacts with nucleoprotein N. Interacts with protein Z; this interaction inhibits viral transcription and replication, Z partially blocks the product exit tunnel for the releasing nascent RNA product. Mn(2+) is required as a cofactor. Requires Mg(2+) as cofactor.

It localises to the virion. Its subcellular location is the host cytoplasm. The enzyme catalyses RNA(n) + a ribonucleoside 5'-triphosphate = RNA(n+1) + diphosphate. Functionally, RNA-dependent RNA polymerase, which is responsible for the replication and transcription of the viral RNA genome using antigenomic RNA as an intermediate. During transcription, synthesizes subgenomic RNAs and assures their capping by a cap-snatching mechanism, which involves the endonuclease activity cleaving the host capped pre-mRNAs. These short capped RNAs are then used as primers for viral transcription. The 3'-end of subgenomic mRNAs molecules are heterogeneous and not polyadenylated. The replicase function is to direct synthesis of antigenomic and genomic RNA which are encapsidated and non capped. As a consequence of the use of the same enzyme for both transcription and replication, these mechanisms need to be well coordinated. These processes may be regulated by proteins N and Z in a dose-dependent manner. Z protein inhibits the viral polymerase L und thus the viral transcription and RNA synthesis. The sequence is that of RNA-directed RNA polymerase L from Homo sapiens (Human).